A 301-amino-acid chain; its full sequence is Chitosanase (301 aa).

A signal peptide spans 1-42; it reads MHMSNARPSKSRTKFLLAFLCFTLMASLFGATALFGPSKAAA. E79 functions as the Proton donor in the catalytic mechanism. Cysteines 92 and 166 form a disulfide. The active-site Nucleophile is the D97.

Belongs to the glycosyl hydrolase 46 family.

The protein localises to the secreted. The catalysed reaction is Endohydrolysis of beta-(1-&gt;4)-linkages between D-glucosamine residues in a partly acetylated chitosan.. Aids in the defense against invading fungal pathogens by degrading their cell wall chitosan. This Niallia circulans (Bacillus circulans) protein is Chitosanase (csn).